A 634-amino-acid polypeptide reads, in one-letter code: Chaperone protein DnaK (634 aa).

The residue at position 197 (T197) is a Phosphothreonine; by autocatalysis. Residues 515-528 (LHKEDDKKRKESVD) show a composition bias toward basic and acidic residues. Disordered stretches follow at residues 515 to 536 (LHKE…ADAI) and 595 to 634 (YKAA…AEVE). The span at 603–615 (NAGGTAGGNGNAG) shows a compositional bias: gly residues.

It belongs to the heat shock protein 70 family.

In terms of biological role, acts as a chaperone. This Campylobacter hominis (strain ATCC BAA-381 / DSM 21671 / CCUG 45161 / LMG 19568 / NCTC 13146 / CH001A) protein is Chaperone protein DnaK.